We begin with the raw amino-acid sequence, 448 residues long: Cytoplasmic tRNA 2-thiolation protein 2 (448 aa).

This sequence belongs to the CTU2/NCS2 family.

It is found in the cytoplasm. It participates in tRNA modification; 5-methoxycarbonylmethyl-2-thiouridine-tRNA biosynthesis. Its function is as follows. Plays a central role in 2-thiolation of mcm(5)S(2)U at tRNA wobble positions of tRNA(Lys), tRNA(Glu) and tRNA(Gln). May act by forming a heterodimer with NCS6 that ligates sulfur from thiocarboxylated URM1 onto the uridine of tRNAs at wobble position. Prior mcm(5) tRNA modification by the elongator complex is required for 2-thiolation. May also be involved in protein urmylation. In Lodderomyces elongisporus (strain ATCC 11503 / CBS 2605 / JCM 1781 / NBRC 1676 / NRRL YB-4239) (Yeast), this protein is Cytoplasmic tRNA 2-thiolation protein 2.